The primary structure comprises 96 residues: Aspartyl/glutamyl-tRNA(Asn/Gln) amidotransferase subunit C (96 aa).

It belongs to the GatC family. In terms of assembly, heterotrimer of A, B and C subunits.

The enzyme catalyses L-glutamyl-tRNA(Gln) + L-glutamine + ATP + H2O = L-glutaminyl-tRNA(Gln) + L-glutamate + ADP + phosphate + H(+). The catalysed reaction is L-aspartyl-tRNA(Asn) + L-glutamine + ATP + H2O = L-asparaginyl-tRNA(Asn) + L-glutamate + ADP + phosphate + 2 H(+). Functionally, allows the formation of correctly charged Asn-tRNA(Asn) or Gln-tRNA(Gln) through the transamidation of misacylated Asp-tRNA(Asn) or Glu-tRNA(Gln) in organisms which lack either or both of asparaginyl-tRNA or glutaminyl-tRNA synthetases. The reaction takes place in the presence of glutamine and ATP through an activated phospho-Asp-tRNA(Asn) or phospho-Glu-tRNA(Gln). This chain is Aspartyl/glutamyl-tRNA(Asn/Gln) amidotransferase subunit C, found in Herpetosiphon aurantiacus (strain ATCC 23779 / DSM 785 / 114-95).